Consider the following 669-residue polypeptide: Dymeclin (669 aa).

Gly2 carries the N-myristoyl glycine lipid modification.

This sequence belongs to the dymeclin family. In terms of processing, myristoylated in vitro; myristoylation is not essential for protein targeting to Golgi compartment.

Its subcellular location is the cytoplasm. The protein resides in the golgi apparatus. Necessary for correct organization of Golgi apparatus. The chain is Dymeclin (DYM) from Gallus gallus (Chicken).